Consider the following 554-residue polypeptide: Aspartyl/glutamyl-tRNA(Asn/Gln) amidotransferase subunit B (554 aa).

The segment at 491–554 (AEQPTAPPPE…TPVSHQDAHA (64 aa)) is disordered. Residues 502 to 540 (ESAAETPEAPPAVEDAPPEAPTEAITAEAGSAEAITAAS) are compositionally biased toward low complexity.

It belongs to the GatB/GatE family. GatB subfamily. In terms of assembly, heterotrimer of A, B and C subunits.

It carries out the reaction L-glutamyl-tRNA(Gln) + L-glutamine + ATP + H2O = L-glutaminyl-tRNA(Gln) + L-glutamate + ADP + phosphate + H(+). The catalysed reaction is L-aspartyl-tRNA(Asn) + L-glutamine + ATP + H2O = L-asparaginyl-tRNA(Asn) + L-glutamate + ADP + phosphate + 2 H(+). Its function is as follows. Allows the formation of correctly charged Asn-tRNA(Asn) or Gln-tRNA(Gln) through the transamidation of misacylated Asp-tRNA(Asn) or Glu-tRNA(Gln) in organisms which lack either or both of asparaginyl-tRNA or glutaminyl-tRNA synthetases. The reaction takes place in the presence of glutamine and ATP through an activated phospho-Asp-tRNA(Asn) or phospho-Glu-tRNA(Gln). In Gloeobacter violaceus (strain ATCC 29082 / PCC 7421), this protein is Aspartyl/glutamyl-tRNA(Asn/Gln) amidotransferase subunit B.